Consider the following 1086-residue polypeptide: Selenocysteine insertion sequence-binding protein 2-like (1086 aa).

Disordered regions lie at residues 155 to 207, 243 to 386, 615 to 657, 880 to 904, and 919 to 1086; these read GQAF…GPDS, AKGR…SESL, QEDA…SPMA, SDGL…KPSR, and AAGS…PQST. Over residues 193 to 206 the composition is skewed to polar residues; the sequence is NVATQKETSATGPD. The residue at position 276 (serine 276) is a Phosphoserine. 2 stretches are compositionally biased toward polar residues: residues 294–303 and 328–344; these read GTMNRLESSG and QAFS…NNLQ. Over residues 355 to 370 the composition is skewed to basic and acidic residues; it reads SSERRQNLQKRQDNKH. The span at 624–657 shows a compositional bias: polar residues; that stretch reads SDASLSPASQNSPYCMTPVSQGSPASSGIGSPMA. Residues 922–931 are compositionally biased toward polar residues; the sequence is SITSAPSQGK. Basic and acidic residues predominate over residues 933–943; the sequence is TGDKDELKPDD. Residues 947 to 957 show a composition bias toward polar residues; that stretch reads ASQQSTETGSL. Residues 981–994 are compositionally biased toward acidic residues; the sequence is LEEEEDEEEEEEDY. Residues 1004-1022 are compositionally biased toward polar residues; it reads QLNSRIESWVSETQRTMET. Over residues 1032-1046 the composition is skewed to acidic residues; the sequence is SEEDSAEQSGEEAAE.

Binds SECIS (Sec insertion sequence) elements present on selenocysteine (Sec) protein mRNAs, but does not promote Sec incorporation into selenoproteins. The sequence is that of Selenocysteine insertion sequence-binding protein 2-like (Secisbp2l) from Mus musculus (Mouse).